A 429-amino-acid chain; its full sequence is Adenylosuccinate synthetase (429 aa).

GTP is bound by residues 12 to 18 and 40 to 42; these read GDEGKGK and GHT. The Proton acceptor role is filled by D13. Residues D13 and G40 each contribute to the Mg(2+) site. IMP contacts are provided by residues 13–16, 38–41, T128, R142, Q223, T238, and R302; these read DEGK and NAGH. The Proton donor role is filled by H41. Substrate is bound at residue 298 to 304; the sequence is VNTGRPR. GTP is bound by residues R304, 330–332, and 412–414; these read KLD and GVG.

The protein belongs to the adenylosuccinate synthetase family. Homodimer. Mg(2+) is required as a cofactor.

It localises to the cytoplasm. The catalysed reaction is IMP + L-aspartate + GTP = N(6)-(1,2-dicarboxyethyl)-AMP + GDP + phosphate + 2 H(+). It functions in the pathway purine metabolism; AMP biosynthesis via de novo pathway; AMP from IMP: step 1/2. Functionally, plays an important role in the de novo pathway of purine nucleotide biosynthesis. Catalyzes the first committed step in the biosynthesis of AMP from IMP. The sequence is that of Adenylosuccinate synthetase from Arthrobacter sp. (strain FB24).